The sequence spans 485 residues: NGFI-A-binding protein 1 (485 aa).

Residues 4 to 82 (ALPRTLGELQ…RDWVTNPGLF (79 aa)) are NCD1. Glycyl lysine isopeptide (Lys-Gly) (interchain with G-Cter in SUMO2) cross-links involve residues Lys-126, Lys-129, and Lys-143. Residues 160-187 (WQGHHATESEHSLSPADVGSPASPKESS) form a disordered region. Phosphoserine occurs at positions 171 and 182. A Glycyl lysine isopeptide (Lys-Gly) (interchain with G-Cter in SUMO2) cross-link involves residue Lys-211. The interval 220 to 309 (LLKNNKKLAK…ARQVSREVTY (90 aa)) is NCD2. The tract at residues 306–337 (EVTYKYTYRTTRLKCGERDELSPKRIKVEDGF) is necessary for nuclear localization. Ser-327 carries the post-translational modification Phosphoserine. Lys-332 participates in a covalent cross-link: Glycyl lysine isopeptide (Lys-Gly) (interchain with G-Cter in SUMO1); alternate. Lys-332 is covalently cross-linked (Glycyl lysine isopeptide (Lys-Gly) (interchain with G-Cter in SUMO2); alternate). Glycyl lysine isopeptide (Lys-Gly) (interchain with G-Cter in SUMO2) cross-links involve residues Lys-354, Lys-368, and Lys-372. The tract at residues 398–432 (RQSSGEHSPDGLPSDGSDGQGERPLNLRMPNVQNR) is disordered. Ser-405 is modified (phosphoserine). Residues Lys-452, Lys-463, and Lys-475 each participate in a glycyl lysine isopeptide (Lys-Gly) (interchain with G-Cter in SUMO2) cross-link. Lys-478 is covalently cross-linked (Glycyl lysine isopeptide (Lys-Gly) (interchain with G-Cter in SUMO1); alternate). Residue Lys-478 forms a Glycyl lysine isopeptide (Lys-Gly) (interchain with G-Cter in SUMO2); alternate linkage.

This sequence belongs to the NAB family. In terms of assembly, homomultimers may associate with EGR1 bound to DNA.

The protein resides in the nucleus. Its function is as follows. Acts as a transcriptional repressor for zinc finger transcription factors EGR1 and EGR2. This Mesocricetus auratus (Golden hamster) protein is NGFI-A-binding protein 1 (NAB1).